The chain runs to 456 residues: Phospholipase A1 member A (456 aa).

The first 25 residues, 1-25 (MPPGPWESCFWVGGLILWLSVGSSG), serve as a signal peptide directing secretion. Asparagine 79 carries an N-linked (GlcNAc...) asparagine glycan. The active-site Nucleophile is serine 166. The active-site Charge relay system is the aspartate 190. Cysteines 245 and 258 form a disulfide. Histidine 260 serves as the catalytic Charge relay system. Disulfide bonds link cysteine 282/cysteine 293 and cysteine 296/cysteine 304. A glycan (N-linked (GlcNAc...) asparagine) is linked at asparagine 365. The segment at 374 to 456 (IPKQQRYGKG…VSCDLKIACV (83 aa)) is involved in the recognition of diacyl-phospholipids.

It belongs to the AB hydrolase superfamily. Lipase family. As to expression, widely expressed. Expressed in placenta, prostate and liver. Weakly or not expressed in skin, leukocytes, platelets, colon, spleen, lung, muscle and kidney.

The protein localises to the secreted. It carries out the reaction a 1,2-diacyl-sn-glycero-3-phospho-L-serine + H2O = a 2-acyl-sn-glycero-3-phospho-L-serine + a fatty acid + H(+). The enzyme catalyses 1,2-di-(9Z)-octadecenoyl-sn-glycero-3-phospho-L-serine + H2O = 2-(9Z-octadecenoyl)-sn-glycero-3-phospho-L-serine + (9Z)-octadecenoate + H(+). The catalysed reaction is 1-hexadecanoyl-2-(5Z,8Z,11Z,14Z-eicosatetraenoyl)-sn-glycero-3-phospho-L-serine + H2O = 2-(5Z,8Z,11Z,14Z)-eicosatetraenoyl-sn-glycero-3-phospho-L-serine + hexadecanoate + H(+). It catalyses the reaction a 1-acyl-sn-glycero-3-phospho-L-serine + H2O = sn-glycero-3-phospho-L-serine + a fatty acid + H(+). It carries out the reaction 1-(9Z-octadecenoyl)-sn-glycero-3-phospho-L-serine + H2O = sn-glycero-3-phospho-L-serine + (9Z)-octadecenoate + H(+). Its function is as follows. Hydrolyzes the ester bond of the acyl group attached at the sn-1 position of phosphatidylserines (phospholipase A1 activity) and 1-acyl-2-lysophosphatidylserines (lysophospholipase activity) in the pathway of phosphatidylserines acyl chain remodeling. Cleaves phosphatidylserines exposed on the outer leaflet of the plasma membrane of apoptotic cells producing 2-acyl-1-lysophosphatidylserines, which in turn enhance mast cell activation and histamine production. Has no activity toward other glycerophospholipids including phosphatidylcholines, phosphatidylethanolamines, phosphatidic acids or phosphatidylinositols, or glycerolipids such as triolein. In terms of biological role, hydrolyzes lyso-PS but not PS. The protein is Phospholipase A1 member A of Homo sapiens (Human).